Reading from the N-terminus, the 689-residue chain is Glycine--tRNA ligase beta subunit (689 aa).

It belongs to the class-II aminoacyl-tRNA synthetase family. As to quaternary structure, tetramer of two alpha and two beta subunits.

It localises to the cytoplasm. It catalyses the reaction tRNA(Gly) + glycine + ATP = glycyl-tRNA(Gly) + AMP + diphosphate. This chain is Glycine--tRNA ligase beta subunit, found in Edwardsiella ictaluri (strain 93-146).